We begin with the raw amino-acid sequence, 290 residues long: uncharacterized protein (290 aa).

The first 25 residues, 1–25, serve as a signal peptide directing secretion; that stretch reads MNKKSILSKTSLGSLFFLFGTALSA. Cysteine 26 is lipidated: N-palmitoyl cysteine. Cysteine 26 carries S-diacylglycerol cysteine lipidation. A disordered region spans residues 183–203; the sequence is GTDSKGSGSNNQNGGVTEKDF. Over residues 186–197 the composition is skewed to low complexity; sequence SKGSGSNNQNGG.

The protein belongs to the MG439/MG440 family.

It localises to the cell membrane. This is an uncharacterized protein from Mycoplasma pneumoniae (strain ATCC 29342 / M129 / Subtype 1) (Mycoplasmoides pneumoniae).